The following is a 494-amino-acid chain: Alpha-amylase-related protein (494 aa).

A signal peptide spans 1-20; it reads MIKFALALTLCLAGASLSLA. Residue Q21 is modified to Pyrrolidone carboxylic acid. A disulfide bond links C48 and C104. Residues N118, Q169, and D178 each coordinate Ca(2+). A disulfide bridge connects residues C157 and C171. R206 contacts chloride. D208 functions as the Nucleophile in the catalytic mechanism. H212 lines the Ca(2+) pocket. The active-site Proton donor is the E245. Residues N308 and R343 each coordinate chloride. 3 disulfide bridges follow: C376-C382, C418-C441, and C448-C460.

The protein belongs to the glycosyl hydrolase 13 family. Monomer. Requires Ca(2+) as cofactor. The cofactor is chloride.

The protein localises to the secreted. It carries out the reaction Endohydrolysis of (1-&gt;4)-alpha-D-glucosidic linkages in polysaccharides containing three or more (1-&gt;4)-alpha-linked D-glucose units.. The protein is Alpha-amylase-related protein (Amyrel) of Drosophila serrata (Fruit fly).